The sequence spans 2083 residues: Nonribosomal peptide synthetase sidD (2083 aa).

An adenylation 1 region spans residues 251–650; it reads TYRQIDQYSS…GEIESQLRAR (400 aa). Residues 764–840 enclose the Carrier 1 domain; it reads RELSDLERRL…AMASVVRICD (77 aa). Serine 801 carries the post-translational modification O-(pantetheine 4'-phosphoryl)serine. The interval 876 to 1146 is condensation 1; sequence EDIYPCTPTQ…IATVPIRVRI (271 aa). The interval 1336 to 1421 is adenylation 2; sequence LSPIGCVGEL…TEIERHLAEH (86 aa). The Carrier 2 domain maps to 1557–1633; sequence NHLSASESIL…DAARVMKVDE (77 aa). At serine 1594 the chain carries O-(pantetheine 4'-phosphoryl)serine. The tract at residues 1674–1946 is condensation 2; it reads DVLPVTDSQD…YQLTPVRVPF (273 aa).

This sequence belongs to the NRP synthetase family.

It participates in siderophore biosynthesis. In terms of biological role, nonribosomal peptide synthetase; part of the siderophore biosynthetic pathway. Aspergillus fumigatus produces four types of siderophores, low-molecular-mass iron chelators, including excreted fusarinine C (FsC) and triacetylfusarinine C (TAFC) for iron uptake; and intacellular ferricrocin (FC) for hyphal and hydroxyferricrocin (HFC) for conidial iron distribution and storage. TAFC consists of three N(2)-acetyl-N(5)-anhydromevalonyl-N(5)-hydroxyornithine residues cyclically linked by ester bonds; FC is a cyclic hexapeptide with the structure Gly-Ser-Gly-(N(5)-acetyl-N(5)-hydroxyornithine)x3. The biosynthesis of all four siderophores depends on the hydroxylation of ornithine, catalyzed by the monooxygenase sidA. Subsequently, the pathways for biosynthesis of extra- and intracellular siderophores split. For biosynthesis of extracellular siderophores, the transacylase sidF transfers anhydromevalonyl to N(5)-hydroxyornithine. The required anhydromevalonyl-CoA moiety is derived from mevalonate by CoA ligation and dehydration catalyzed by sidI and sidH respectively. The acetylation of N(5)-hydroxyornithine for FC biosynthesis involves the constitutively expressed sidL. FC is hydroxylated to HFC by an as yet uncharacterized enzyme during conidiation. Assembly of fusarinine C (FsC) and FC is catalyzed by two different nonribosomal peptide synthetases (NRPS), sidD and sidC respectively. Subsequently, sidG catalyzes N2-acetylation of FsC for forming TAFC. Both extra- and intracellular siderophores are crucial for growth during iron limitation and virulence. In Aspergillus fumigatus (strain ATCC MYA-4609 / CBS 101355 / FGSC A1100 / Af293) (Neosartorya fumigata), this protein is Nonribosomal peptide synthetase sidD.